The primary structure comprises 543 residues: Chaperonin GroEL (543 aa).

ATP is bound by residues 29–32 (TLGP), 86–90 (DGTTT), Gly-413, 476–478 (NAA), and Asp-492.

It belongs to the chaperonin (HSP60) family. Forms a cylinder of 14 subunits composed of two heptameric rings stacked back-to-back. Interacts with the co-chaperonin GroES.

Its subcellular location is the cytoplasm. The enzyme catalyses ATP + H2O + a folded polypeptide = ADP + phosphate + an unfolded polypeptide.. Its function is as follows. Together with its co-chaperonin GroES, plays an essential role in assisting protein folding. The GroEL-GroES system forms a nano-cage that allows encapsulation of the non-native substrate proteins and provides a physical environment optimized to promote and accelerate protein folding. The protein is Chaperonin GroEL of Streptococcus pyogenes serotype M49 (strain NZ131).